The sequence spans 5255 residues: SCO-spondin (5255 aa).

The first 18 residues, 1-18 (MGIVATVLLWVVTEAARG), serve as a signal peptide directing secretion. In terms of domain architecture, EMI spans 19–111 (RWCERTEQVT…ACCAGWSGPH (93 aa)). Residues Asn97, Asn136, Asn156, and Asn255 are each glycosylated (N-linked (GlcNAc...) asparagine). Positions 192–358 (ASCTVWAGSR…PDANPELSCS (167 aa)) constitute a VWFD 1 domain. 2 disulfides stabilise this stretch: Cys194–Cys317 and Cys216–Cys357. The TIL 1 domain maps to 453-508 (CGHGQRYSDCVSSCPASCMAAGTAEEGHCRDDCASGCECTPGLLLDRGACIPQSAC). One can recognise a VWFC 1 domain in the interval 508-601 (CPCLHRGHIY…CGGHQPLSCL (94 aa)). The VWFD 2 domain maps to 546–717 (AECAVLGDLH…NKYRVSTDCP (172 aa)). 3 disulfides stabilise this stretch: Cys548-Cys681, Cys570-Cys716, and Cys592-Cys600. A glycan (N-linked (GlcNAc...) asparagine) is linked at Asn801. A TIL 2 domain is found at 809–868 (CRGGQVYQECSSPCGRTCADLRLDGASSCPSLDNICVSGCNCPEGPVLDDGGQCVPPGVC). The region spanning 868 to 926 (CPCQHSSQLYPAGSKIRQGCNACMCTAGTWSCTDAPCPDAAFCPGDLVYVFGSCLRTCD) is the VWFC 2 domain. N-linked (GlcNAc...) asparagine glycosylation is found at Asn931 and Asn972. One can recognise a VWFD 3 domain in the interval 998-1168 (GTCVATGDPH…NSWRVSLLCP (171 aa)). Intrachain disulfides connect Cys1000/Cys1132, Cys1022/Cys1167, and Cys1043/Cys1050. Residues 1263–1319 (CDGGQEYSACGPPCPQTCRNLGLELPEHCDTMSCLEGCFCPEGKVLHEGSCIDPAEC) enclose the TIL 3 domain. Asn1340 is a glycosylation site (N-linked (GlcNAc...) asparagine). LDL-receptor class A domains follow at residues 1362–1398 (HCPD…EVCA), 1400–1436 (HCAP…RGCP), 1439–1477 (PCAP…AGCS), 1479–1515 (SCSV…RGCV), 1515–1551 (VCPA…AFCP), and 1555–1593 (TCAP…VRCM). Disulfide bonds link Cys1363–Cys1376, Cys1370–Cys1389, Cys1383–Cys1397, Cys1401–Cys1413, Cys1408–Cys1426, Cys1420–Cys1435, Cys1440–Cys1452, Cys1447–Cys1465, Cys1459–Cys1476, Cys1480–Cys1492, Cys1487–Cys1505, Cys1499–Cys1514, Cys1516–Cys1528, Cys1523–Cys1541, Cys1535–Cys1550, Cys1556–Cys1568, Cys1563–Cys1581, and Cys1575–Cys1592. An N-linked (GlcNAc...) asparagine glycan is attached at Asn1610. LDL-receptor class A domains lie at 1616 to 1652 (VCGP…LGCN), 1654 to 1693 (SCVL…DNCG), and 1699 to 1734 (PCPG…LACE). Cystine bridges form between Cys1617–Cys1629, Cys1624–Cys1642, and Cys1636–Cys1651. N-linked (GlcNAc...) asparagine glycosylation is present at Asn1652. Disulfide bonds link Cys1655–Cys1668, Cys1662–Cys1681, Cys1675–Cys1692, Cys1700–Cys1711, Cys1706–Cys1724, and Cys1718–Cys1733. The N-linked (GlcNAc...) asparagine glycan is linked to Asn1713. The N-linked (GlcNAc...) asparagine glycan is linked to Asn1743. An LDL-receptor class A 10 domain is found at 1748 to 1790 (PCAEYSCRDGDCITFKQVCNGLPDCRDGDMASGWLPSDEWDCG). 6 disulfides stabilise this stretch: Cys1749/Cys1759, Cys1754/Cys1772, Cys1766/Cys1789, Cys1801/Cys1837, Cys1805/Cys1842, and Cys1816/Cys1827. TSP type-1 domains are found at residues 1789 to 1843 (CGQW…TACP) and 1845 to 1903 (DGAW…DGCP). N-linked (GlcNAc...) asparagine glycosylation occurs at Asn1856. Intrachain disulfides connect Cys1857–Cys1897, Cys1861–Cys1902, and Cys1871–Cys1881. A TIL 4 domain is found at 1907 to 1961 (CPGGLQPRPCAPCPASCADLASRAPCRREQCTPGCWCAEGLVLDGERGCVRPREC). 2 consecutive EGF-like domains span residues 1919–1956 (CPAS…RGCV) and 1957–1983 (RPRE…CRLC). In terms of domain architecture, VWFC 3 spans 1961–2019 (CRCEVDGLRYWPGQRMKLNCRLCTCLDGQPRRCRHNPACSVSCSWSAWSPWGECLGPCG). The TSP type-1 3 domain occupies 2002–2058 (SCSWSAWSPWGECLGPCGVQSIQWSFRSPSHPGKHGTNRQCRGIYRKARRCQTEPCQ). Cystine bridges form between Cys2003/Cys2042, Cys2014/Cys2018, and Cys2052/Cys2057. One can recognise a VWFC 4 domain in the interval 2058 to 2120 (QECEHQGRSR…GKGDSCCFCA (63 aa)). Residues Asn2125 and Asn2230 are each glycosylated (N-linked (GlcNAc...) asparagine). 4 disulfide bridges follow: Cys2162/Cys2310, Cys2328/Cys2339, Cys2335/Cys2352, and Cys2346/Cys2361. The 149-residue stretch at 2162 to 2310 (CYSPLGIASL…IFLRAELLGC (149 aa)) folds into the F5/8 type C domain. The LDL-receptor class A 11 domain maps to 2327–2362 (PCGTGEFWCGVSCVTASRRCDGATDCPGGADEAGCE). A disordered region spans residues 2352–2373 (CPGGADEAGCEPPSSTTLPTHP). Over residues 2364–2373 (PSSTTLPTHP) the composition is skewed to polar residues. LDL-receptor class A domains are found at residues 2481–2517 (LCPP…AHCG) and 2538–2574 (TCSP…SSCA). 12 disulfides stabilise this stretch: Cys2482-Cys2494, Cys2489-Cys2507, Cys2501-Cys2516, Cys2539-Cys2551, Cys2546-Cys2564, Cys2558-Cys2573, Cys2576-Cys2612, Cys2587-Cys2591, Cys2622-Cys2627, Cys2642-Cys2679, Cys2646-Cys2684, and Cys2657-Cys2669. 2 TSP type-1 domains span residues 2575–2628 (DCIL…RACP) and 2630–2685 (PGAW…QPCG). One can recognise a TIL 5 domain in the interval 2708 to 2750 (PPCPQVCGDLSATSSCQSPCQEGCRCPPGLFLQEGTCVNASQC). Asn2746 carries N-linked (GlcNAc...) asparagine glycosylation. TSP type-1 domains lie at 2790–2844 (ACAW…TPCA), 2849–2903 (SSGW…APCP), and 2905–2958 (AGVW…RPCG). Disulfide bonds link Cys2791/Cys2829, Cys2802/Cys2806, Cys2839/Cys2843, Cys2861/Cys2897, Cys2865/Cys2902, Cys2881/Cys2887, Cys2917/Cys2952, Cys2921/Cys2957, and Cys2932/Cys2942. The TIL 6 domain occupies 2971-3020 (EECRHSEGRCPWICQDLGAGVACTAQCQPGCHCPAGLLLQNGTCVPPSHC). Residues Asn3011, Asn3042, and Asn3065 are each glycosylated (N-linked (GlcNAc...) asparagine). Residues 3020-3077 (CLCHHRGHLYQPGDINALDTCNNCTCVTGQMVCSTETCPVPCTWSNWTAWSTCSHSCD) enclose the VWFC 5 domain. 2 consecutive TSP type-1 domains span residues 3060-3115 (PCTW…QPCR) and 3117-3158 (VAPW…APCP). 3 cysteine pairs are disulfide-bonded: Cys3061–Cys3099, Cys3072–Cys3076, and Cys3109–Cys3114. Asn3136 is a glycosylation site (N-linked (GlcNAc...) asparagine). Residues 3165 to 3217 (CPPGKQWQACAQGAASCAELSAAPPADGSCHPGCYCPPGALLLNNECVAEAAC) form the TIL 7 domain. The VWFC 6 domain occupies 3217-3275 (CPCAVDGVLYQPGDVVPQGCHNCSCIAGRVTNCSQEDCGDVDGPWTPWTPWSECSASCG). N-linked (GlcNAc...) asparagine glycans are attached at residues Asn3238 and Asn3248. One can recognise a TSP type-1 11 domain in the interval 3258–3309 (DGPWTPWTPWSECSASCGPGRQRRYRFCSAHPGVPCAEPQPQERPCARQPCH). 3 disulfides stabilise this stretch: Cys3270/Cys3303, Cys3274/Cys3308, and Cys3285/Cys3293. 3 N-linked (GlcNAc...) asparagine glycosylation sites follow: Asn3350, Asn3366, and Asn3392. TSP type-1 domains follow at residues 3410-3475 (PGAW…PPCP) and 3477-3532 (DGAW…SSCP). Intrachain disulfides connect Cys3422-Cys3468, Cys3426-Cys3474, Cys3437-Cys3449, Cys3489-Cys3524, Cys3492-Cys3531, and Cys3502-Cys3514. A TIL 8 domain is found at 3534–3589 (CAGGLVAFTCGKPCPHSCEDLREDTACMATPRCLPACACPHGQLLQDGDCVPPELC). Residues Asn3598 and Asn3625 are each glycosylated (N-linked (GlcNAc...) asparagine). TSP type-1 domains lie at 3644–3700 (DGGW…EGCP) and 3702–3751 (EEPW…HVCR). Cystine bridges form between Cys3656–Cys3693, Cys3660–Cys3699, Cys3671–Cys3683, Cys3714–Cys3745, Cys3718–Cys3750, and Cys3729–Cys3735. N-linked (GlcNAc...) asparagine glycosylation is found at Asn3823 and Asn3869. 4 TSP type-1 domains span residues 3878 to 3934 (DGGF…PECP), 3951 to 4004 (EEGF…PLCS), 4018 to 4074 (NCSW…QACK), and 4076 to 4131 (DGAW…QPCD). 6 cysteine pairs are disulfide-bonded: Cys3890-Cys3928, Cys3894-Cys3933, Cys3906-Cys3918, Cys3963-Cys3998, Cys3967-Cys4003, and Cys3982-Cys3988. The segment at 3932 to 3951 (ECPAVPTTEPGPGVAGAEEE) is disordered. Asn4018 carries N-linked (GlcNAc...) asparagine glycosylation. 6 cysteine pairs are disulfide-bonded: Cys4019/Cys4055, Cys4030/Cys4034, Cys4068/Cys4073, Cys4088/Cys4125, Cys4092/Cys4130, and Cys4103/Cys4115. The TIL 9 domain maps to 4134 to 4189 (CPPGMALVTCANHCPRHCGDLQEGIVCREEEHCEPGCRCPNGTLEQDGGCVPLAHC). Asn4174 and Asn4211 each carry an N-linked (GlcNAc...) asparagine glycan. TSP type-1 domains lie at 4230–4282 (RCPW…GPCP), 4322–4384 (GAEH…RPCP), and 4386–4433 (ECSW…SGCS). Disulfide bonds link Cys4231–Cys4266, Cys4242–Cys4246, and Cys4276–Cys4281. N-linked (GlcNAc...) asparagine glycosylation occurs at Asn4362. Intrachain disulfides connect Cys4387–Cys4417, Cys4398–Cys4400, and Cys4427–Cys4432. N-linked (GlcNAc...) asparagine glycosylation occurs at Asn4428. Positions 4437–4492 (CEPPFEFQPCSPPCARLCSTLQHPELCPAQSHCLPGCFCPQGLLEQRSACVPPEQC) constitute a TIL 10 domain. The N-linked (GlcNAc...) asparagine glycan is linked to Asn4498. 2 consecutive TSP type-1 domains span residues 4537–4608 (LPLS…DICQ) and 4610–4662 (LCLW…AVCP). 6 cysteine pairs are disulfide-bonded: Cys4548/Cys4601, Cys4551/Cys4607, Cys4575/Cys4591, Cys4611/Cys4646, Cys4622/Cys4626, and Cys4656/Cys4661. Positions 4675–4722 (TTCANSCPRACADLWQHVECVQGGCKPGCRCPQGQLLQDGLCVPTAQC) constitute a TIL 11 domain. 3 N-linked (GlcNAc...) asparagine glycosylation sites follow: Asn4730, Asn4747, and Asn4752. TSP type-1 domains lie at 4762-4815 (CPSY…QPCP) and 4817-4869 (GCQL…HNCT). Cystine bridges form between Cys4774-Cys4809, Cys4778-Cys4814, Cys4789-Cys4798, Cys4818-Cys4852, Cys4829-Cys4833, and Cys4863-Cys4868. Asn4867 is a glycosylation site (N-linked (GlcNAc...) asparagine). Residues 4872 to 4926 (CPRSQVHRECANACPHACADLRPQTQCLPQPCQPGCACPPGQVLQDGACVPPEEC) form the TIL 12 domain. Asn4939 and Asn4970 each carry an N-linked (GlcNAc...) asparagine glycan. The 55-residue stretch at 4979 to 5033 (DCLWSPWSPWSPCSVTCGMGERLSHRHPLRQRLYEGAECLGPPVRRAACHLPDCA) folds into the TSP type-1 27 domain. Intrachain disulfides connect Cys4980–Cys5017, Cys4991–Cys4995, and Cys5027–Cys5032. N-linked (GlcNAc...) asparagine glycans are attached at residues Asn5081, Asn5122, and Asn5169. The VWFC 7 domain maps to 5092-5150 (CECLHQGQLHQPGSEWQEQCARCRCVDGKANCTDGCTPLSCPEGEVKVREPGRCCPVCR). 4 cysteine pairs are disulfide-bonded: Cys5161–Cys5209, Cys5175–Cys5226, Cys5185–Cys5242, and Cys5189–Cys5244. One can recognise a CTCK domain in the interval 5161–5248 (CRRFTELRNI…IHSCECSSCQ (88 aa)).

It belongs to the thrombospondin family.

It localises to the secreted. The protein resides in the extracellular space. Functionally, involved in the modulation of neuronal aggregation. May be involved in developmental events during the formation of the central nervous system. This is SCO-spondin (SSPO) from Gallus gallus (Chicken).